A 404-amino-acid chain; its full sequence is Cysteine desulfurase IscS (404 aa).

Residues 75-76 (AT), Asn-155, Gln-183, and 203-205 (SAH) each bind pyridoxal 5'-phosphate. Position 206 is an N6-(pyridoxal phosphate)lysine (Lys-206). Thr-243 provides a ligand contact to pyridoxal 5'-phosphate. Catalysis depends on Cys-328, which acts as the Cysteine persulfide intermediate. Position 328 (Cys-328) interacts with [2Fe-2S] cluster.

Belongs to the class-V pyridoxal-phosphate-dependent aminotransferase family. NifS/IscS subfamily. In terms of assembly, homodimer. Forms a heterotetramer with IscU, interacts with other sulfur acceptors. Pyridoxal 5'-phosphate serves as cofactor.

The protein resides in the cytoplasm. The enzyme catalyses (sulfur carrier)-H + L-cysteine = (sulfur carrier)-SH + L-alanine. It functions in the pathway cofactor biosynthesis; iron-sulfur cluster biosynthesis. Master enzyme that delivers sulfur to a number of partners involved in Fe-S cluster assembly, tRNA modification or cofactor biosynthesis. Catalyzes the removal of elemental sulfur atoms from cysteine to produce alanine. Functions as a sulfur delivery protein for Fe-S cluster synthesis onto IscU, an Fe-S scaffold assembly protein, as well as other S acceptor proteins. The sequence is that of Cysteine desulfurase IscS from Vibrio campbellii (strain ATCC BAA-1116).